A 172-amino-acid polypeptide reads, in one-letter code: Co-chaperone protein HscB homolog (172 aa).

The J domain maps to 2–74 (NYFELFGLVE…LRRAEYLLSL (73 aa)).

The protein belongs to the HscB family. As to quaternary structure, interacts with HscA and stimulates its ATPase activity.

Its function is as follows. Co-chaperone involved in the maturation of iron-sulfur cluster-containing proteins. Seems to help targeting proteins to be folded toward HscA. The sequence is that of Co-chaperone protein HscB homolog from Aeromonas hydrophila subsp. hydrophila (strain ATCC 7966 / DSM 30187 / BCRC 13018 / CCUG 14551 / JCM 1027 / KCTC 2358 / NCIMB 9240 / NCTC 8049).